A 219-amino-acid polypeptide reads, in one-letter code: Casein kinase II subunit beta' (219 aa).

At T2 the chain carries Phosphothreonine; by autocatalysis.

It belongs to the casein kinase 2 subunit beta family. In terms of assembly, tetramer of two alpha and two beta' subunits. In terms of processing, phosphorylated by alpha subunit.

In terms of biological role, participates in Wnt signaling. Plays a complex role in regulating the basal catalytic activity of the alpha subunit. This is Casein kinase II subunit beta' (CkIIbeta2) from Drosophila melanogaster (Fruit fly).